Here is a 341-residue protein sequence, read N- to C-terminus: UDP-3-O-acylglucosamine N-acyltransferase (341 aa).

Residue H255 is the Proton acceptor of the active site.

The protein belongs to the transferase hexapeptide repeat family. LpxD subfamily. As to quaternary structure, homotrimer.

It catalyses the reaction a UDP-3-O-[(3R)-3-hydroxyacyl]-alpha-D-glucosamine + a (3R)-hydroxyacyl-[ACP] = a UDP-2-N,3-O-bis[(3R)-3-hydroxyacyl]-alpha-D-glucosamine + holo-[ACP] + H(+). The protein operates within bacterial outer membrane biogenesis; LPS lipid A biosynthesis. Functionally, catalyzes the N-acylation of UDP-3-O-acylglucosamine using 3-hydroxyacyl-ACP as the acyl donor. Is involved in the biosynthesis of lipid A, a phosphorylated glycolipid that anchors the lipopolysaccharide to the outer membrane of the cell. This chain is UDP-3-O-acylglucosamine N-acyltransferase, found in Granulibacter bethesdensis (strain ATCC BAA-1260 / CGDNIH1).